Consider the following 285-residue polypeptide: uncharacterized protein (285 aa).

2 disordered regions span residues A115–N139 and E152–V183. Composition is skewed to basic and acidic residues over residues K128–R138 and E152–T170.

This is an uncharacterized protein from Escherichia coli (strain K12).